Consider the following 135-residue polypeptide: Probable histone H2A.1 (135 aa).

Belongs to the histone H2A family. In terms of assembly, the nucleosome is a histone octamer containing two molecules each of H2A, H2B, H3 and H4 assembled in one H3-H4 heterotetramer and two H2A-H2B heterodimers. The octamer wraps approximately 147 bp of DNA.

Its subcellular location is the nucleus. It localises to the chromosome. In terms of biological role, core component of nucleosome. Nucleosomes wrap and compact DNA into chromatin, limiting DNA accessibility to the cellular machineries which require DNA as a template. Histones thereby play a central role in transcription regulation, DNA repair, DNA replication and chromosomal stability. DNA accessibility is regulated via a complex set of post-translational modifications of histones, also called histone code, and nucleosome remodeling. The polypeptide is Probable histone H2A.1 (Oryza sativa subsp. japonica (Rice)).